The following is a 122-amino-acid chain: Cytochrome c-556 (122 aa).

M11, C111, C114, and H115 together coordinate heme. 4 residues coordinate heme c: M11, C111, C114, and H115.

In terms of assembly, monomer. Binds 1 heme c group covalently per subunit.

Low-spin monoheme cytochrome c. The sequence is that of Cytochrome c-556 from Agrobacterium tumefaciens (strain II Chrys).